The sequence spans 93 residues: MAKCTKKVGGIVSKYRTHHGASLWKMVKEIEISQHTKYTCSFCGKTKMKRRAVKIRHCNSCMKTVAGSAWTYNTTSAVMVKSAIRRLKELKDQ.

Residues 40-61 (CSFCGKTKMKRRAVKIRHCNSC) form a C4-type zinc finger.

Belongs to the eukaryotic ribosomal protein eL43 family.

This chain is Putative ribosomal protein eL43-like (RPL37AP8), found in Homo sapiens (Human).